Consider the following 378-residue polypeptide: Stimulator of interferon genes protein (378 aa).

At Met-1–Arg-17 the chain is on the cytoplasmic side. A mediates interaction with ZDHHC1 and ZDHHC11 region spans residues Met-1 to Leu-190. The helical transmembrane segment at Ala-18–Trp-34 threads the bilayer. At Gly-35 to Leu-44 the chain is on the lumenal side. The chain crosses the membrane as a helical span at residues Lys-45–Glu-69. The Cytoplasmic portion of the chain corresponds to Leu-70–Ser-91. Cys-88 is lipidated: S-palmitoyl cysteine. A helical transmembrane segment spans residues Ser-92–Tyr-106. The Lumenal segment spans residues Cys-107 to Pro-116. Residues Phe-117 to Leu-134 form a helical membrane-spanning segment. At Gly-135–Phe-378 the chain is on the cytoplasmic side. Residue Lys-150 forms a Glycyl lysine isopeptide (Lys-Gly) (interchain with G-Cter in ubiquitin) linkage. Positions Phe-153–Glu-339 are cyclic dinucleotide-binding domain (CBD). Positions 162 and 167 each coordinate 2',3'-cGAMP. Positions 162 and 167 each coordinate 3',3'-c-di-GMP. Tyr-167 is a binding site for 2',3'-cUAMP. A Glycyl lysine isopeptide (Lys-Gly) (interchain with G-Cter in ubiquitin) cross-link involves residue Lys-236. Arg-238 and Thr-263 together coordinate 2',3'-cGAMP. Arg-238 and Thr-263 together coordinate 2',3'-cUAMP. 3',3'-c-di-GMP is bound by residues Arg-238–Thr-241 and Thr-263. Residues Glu-339 to Phe-378 are C-terminal tail (CTT). Residue Ser-354 is modified to Phosphoserine. 2 positions are modified to phosphoserine; by TBK1: Ser-357 and Ser-365. Positions Leu-362–Ser-365 match the pLxIS motif motif.

The protein belongs to the STING family. Homodimer; forms a homodimer in absence of cyclic nucleotide (c-di-GMP or cGAMP); 'Lys-63'-linked ubiquitination at Lys-150 is required for homodimerization. Homotetramer; in presence of cyclic nucleotide (c-di-GMP or cGAMP), forms tetramers and higher-order oligomers through side-by-side packing. Interacts (when phosphorylated) with IRF3; following activation and phosphorylation on the pLxIS motif by TBK1, recruits IRF3. Interacts with RIGI, MAVS and SSR2. Interacts with RNF5 and TRIM56. Interacts with TBK1; when homodimer, leading to subsequent production of IFN-beta. Interacts with IFIT1 and IFIT2. Interacts with TRIM29; this interaction induces STING1 ubiquitination and subsequent degradation. Associates with the MHC-II complex. Interacts with STEEP1; interaction takes place upon cGAMP-activation and STING1 phosphorylation by MAP3K7/TAK1 and promotes STING1 translocation to COPII vesicles. Interacts with SEC24A, SEC24B and SEC24C; promoting translocation to COPII vesicles. Interacts (when ubiquitinated) with SQSTM1; leading to relocalization to autophagosomes. Interacts with SURF4. Interacts with HNRNPA2B1. Interacts with ZDHHC1; ZDHHC1 constitutively interacts with STING1 and in presence of DNA viruses activates it by promoting its cGAMP-induced oligomerization and the recruitment of downstream signaling components. Interacts with ZDHHC11; in presence of DNA viruses promotes the recruitment of IRF3 to STING1. Interacts with TOMM70. Interacts with TAB1; promoting recruitment of TAB1 to the endoplasmic reticulum membrane and subsequent activation of MAP3K7/TAK1. Interacts (via transmembrane domain) with TMEM203. Interacts with DDX41. Phosphorylation by TBK1 leads to activation and production of IFN-beta. Following cyclic nucleotide (c-di-GMP or cGAMP)-binding, activation and translocation from the endoplasmic reticulum, STING1 is phosphorylated by TBK1 at Ser-365 in the pLxIS motif. The phosphorylated pLxIS motif constitutes an IRF3-binding motif, leading to recruitment of the transcription factor IRF3 to induce type-I interferons and other cytokines. Phosphorylated on tyrosine residues upon MHC-II aggregation. Dephosphorylation by PPP6C leads to inactivation and decreased production of IFN-beta. Phosphorylation at Ser-357 is also required to activate IRF3. Phosphorylation at Ser-354 by MAP3K7/TAK1 facilitates its interaction with STEEP1, promoting STING1 translocation to COPII vesicles. In terms of processing, ubiquitinated. Ubiquitinated via 'Lys-63'-linked ubiquitin chains in response to double-stranded DNA treatment, leading to relocalization to autophagosomes and subsequent degradation; this process is dependent on SQSTM1. 'Lys-63'-linked ubiquitination mediated by TRIM56 at Lys-150 promotes homodimerization and recruitment of the antiviral kinase TBK1 and subsequent production of IFN-beta. 'Lys-48'-linked polyubiquitination at Lys-150 occurring after viral infection is mediated by RNF5 and leads to proteasomal degradation. 'Lys-11'-linked polyubiquitination at Lys-150 by RNF26 leads to stabilize STING1: it protects STING1 from RNF5-mediated 'Lys-48'-linked polyubiquitination. 'Lys-33'-linked and 'Lys-48'-linked deubiquitinated by USP20; leading to its stabilization and promotion of innate antiviral response. 'Lys-48'-linked deubiquitinated by USP44; leading to its stabilization and promotion of innate antiviral response. 'Lys-63'-linked deubiquitinated by USP49; leading to inhibition of the subsequent recruitment of TBK1 to the signaling complex. 'Lys-63'-linked ubiquitination mediated by RNF39 promotes the activation of the cGAS-STING pathway. Post-translationally, palmitoylation takes place in the Golgi apparatus and creates a platform for the recruitment of TBK1.

Its subcellular location is the endoplasmic reticulum membrane. It is found in the cytoplasm. The protein localises to the perinuclear region. It localises to the endoplasmic reticulum-Golgi intermediate compartment membrane. The protein resides in the golgi apparatus membrane. Its subcellular location is the cytoplasmic vesicle. It is found in the autophagosome membrane. The protein localises to the mitochondrion outer membrane. It localises to the cell membrane. The catalysed reaction is H(+)(in) = H(+)(out). Facilitator of innate immune signaling that acts as a sensor of cytosolic DNA from bacteria and viruses and promotes the production of type I interferon (IFN-alpha and IFN-beta). Innate immune response is triggered in response to non-CpG double-stranded DNA from viruses and bacteria delivered to the cytoplasm. Acts by binding cyclic dinucleotides: recognizes and binds cyclic di-GMP (c-di-GMP), a second messenger produced by bacteria, cyclic UMP-AMP (2',3'-cUAMP), and cyclic GMP-AMP (cGAMP), a messenger produced by CGAS in response to DNA virus in the cytosol. Upon binding to c-di-GMP or cGAMP, STING oligomerizes, translocates from the endoplasmic reticulum and is phosphorylated by TBK1 on the pLxIS motif, leading to recruitment and subsequent activation of the transcription factor IRF3 to induce expression of type I interferon and exert a potent anti-viral state. Exhibits 2',3' phosphodiester linkage-specific ligand recognition: can bind both 2'-3' linked cGAMP (2'-3'-cGAMP) and 3'-3' linked cGAMP but is preferentially activated by 2'-3' linked cGAMP. The preference for 2'-3'-cGAMP, compared to other linkage isomers is probably due to the ligand itself, whichs adopts an organized free-ligand conformation that resembles the STING1-bound conformation and pays low energy costs in changing into the active conformation. In addition to promote the production of type I interferons, plays a direct role in autophagy. Following cGAMP-binding, STING1 buds from the endoplasmic reticulum into COPII vesicles, which then form the endoplasmic reticulum-Golgi intermediate compartment (ERGIC). The ERGIC serves as the membrane source for WIPI2 recruitment and LC3 lipidation, leading to formation of autophagosomes that target cytosolic DNA or DNA viruses for degradation by the lysosome. Promotes autophagy by acting as a proton channel that directs proton efflux from the Golgi to facilitate MAP1LC3B/LC3B lipidation. The autophagy- and interferon-inducing activities can be uncoupled and autophagy induction is independent of TBK1 phosphorylation. Autophagy is also triggered upon infection by bacteria: following c-di-GMP-binding, which is produced by live Gram-positive bacteria, promotes reticulophagy. May be involved in translocon function, the translocon possibly being able to influence the induction of type I interferons. May be involved in transduction of apoptotic signals via its association with the major histocompatibility complex class II (MHC-II). This chain is Stimulator of interferon genes protein, found in Bos taurus (Bovine).